The primary structure comprises 430 residues: MGSGNHVDIVDVSSGEEDVDTRGDVEYTDWLNGVMEPVDDTSDSTDIVEVLSEVRGGVNSQYRKPNSSNQALEDDDDCVILDCDPDKTRETTSVDDDDDDDVLVVGQKGEIACRDFPHPRHSCAKYAFNSTSHEKYCDMCHCYVCDIRAPCPYWCIAVSSIDHCHANDKEKIWKNQREYFRTGYMPTAPSSKPTPSILRVPKNTLLRKNHVEIRPCSSSTRVANPSSVKARHRIRQPIPHNQGLQSQPAQSLSTVRDSVIQKDRSSYRFSLRSRVASSAGNGISIRFNNAQVSQSSHHSSSTVAPTLNPETYTQQRNVRDHCTALPGSQSNVFTRHADQNIRGSGNRQFQTNVDRFAPSKAPLTAEDSHTATVQQQPGINENVLETKLSEFEKWLMENPNPTGPVSPLPEPGNQDYASTLSFDFETFLND.

Residues 1-21 (MGSGNHVDIVDVSSGEEDVDT) are disordered. Residues 231–300 (RHRIRQPIPH…QVSQSSHHSS (70 aa)) are nuclear localization.

As to quaternary structure, interacts with RPM1 (via its NB-ARC domain). Binds to ARF1 in the nucleus.

It is found in the nucleus. In terms of biological role, resistance protein interactor which positively enhances RPM1-mediated resistance to necrotrophic bacterial pathogens Pseudomonas syringae pv. tomato DC3000 harboring type III effector protein AvrRpm1 or AvrB, but prevents the hypersensitive response (HR) controlled by RPM1. Together with ARF1, promotes leaf senescence and cell death, probably by facilitating the translocation of ARF1 into the nucleus, and activates ROS-related enzymes (e.g. POD, CAT and SOD). The sequence is that of RPM1 interacting protein 13 from Arabidopsis thaliana (Mouse-ear cress).